A 206-amino-acid polypeptide reads, in one-letter code: Dihydrofolate reductase (206 aa).

The region spanning 6-204 (SLTLIVALTT…FDYEFEMWTR (199 aa)) is the DHFR domain. NADP(+) is bound by residues A12 and 18 to 24 (GIGRSNS). 32-37 (EISYFK) serves as a coordination point for substrate. 59–61 (RKT) is a binding site for NADP(+). R75 lines the substrate pocket. NADP(+)-binding positions include 81 to 83 (TRN) and 124 to 131 (GGAQLYKA).

This sequence belongs to the dihydrofolate reductase family.

It carries out the reaction (6S)-5,6,7,8-tetrahydrofolate + NADP(+) = 7,8-dihydrofolate + NADPH + H(+). It functions in the pathway cofactor biosynthesis; tetrahydrofolate biosynthesis; 5,6,7,8-tetrahydrofolate from 7,8-dihydrofolate: step 1/1. In terms of biological role, key enzyme in folate metabolism. Catalyzes an essential reaction for de novo glycine and purine synthesis, and for DNA precursor synthesis. In Pneumocystis carinii, this protein is Dihydrofolate reductase.